The chain runs to 123 residues: Large ribosomal subunit protein uL18 (123 aa).

The protein belongs to the universal ribosomal protein uL18 family. Part of the 50S ribosomal subunit; part of the 5S rRNA/L5/L18/L25 subcomplex. Contacts the 5S and 23S rRNAs.

Its function is as follows. This is one of the proteins that bind and probably mediate the attachment of the 5S RNA into the large ribosomal subunit, where it forms part of the central protuberance. This is Large ribosomal subunit protein uL18 from Bifidobacterium longum (strain DJO10A).